The primary structure comprises 314 residues: tRNA dimethylallyltransferase 2 (314 aa).

8-15 lines the ATP pocket; sequence GPTGSGKS. 10 to 15 lines the substrate pocket; it reads TGSGKS.

Belongs to the IPP transferase family. Monomer. Mg(2+) serves as cofactor.

The catalysed reaction is adenosine(37) in tRNA + dimethylallyl diphosphate = N(6)-dimethylallyladenosine(37) in tRNA + diphosphate. Functionally, catalyzes the transfer of a dimethylallyl group onto the adenine at position 37 in tRNAs that read codons beginning with uridine, leading to the formation of N6-(dimethylallyl)adenosine (i(6)A). The sequence is that of tRNA dimethylallyltransferase 2 from Mycobacterium marinum (strain ATCC BAA-535 / M).